Here is a 554-residue protein sequence, read N- to C-terminus: Glucose-6-phosphate isomerase (554 aa).

Residue Glu-358 is the Proton donor of the active site. Active-site residues include His-389 and Lys-515.

It belongs to the GPI family.

It localises to the cytoplasm. It catalyses the reaction alpha-D-glucose 6-phosphate = beta-D-fructose 6-phosphate. It participates in carbohydrate biosynthesis; gluconeogenesis. It functions in the pathway carbohydrate degradation; glycolysis; D-glyceraldehyde 3-phosphate and glycerone phosphate from D-glucose: step 2/4. Catalyzes the reversible isomerization of glucose-6-phosphate to fructose-6-phosphate. This is Glucose-6-phosphate isomerase from Mycobacterium leprae (strain Br4923).